A 342-amino-acid polypeptide reads, in one-letter code: Succinylglutamate desuccinylase (342 aa).

Zn(2+) is bound by residues histidine 64, glutamate 67, and histidine 159. The active site involves glutamate 222.

This sequence belongs to the AspA/AstE family. Succinylglutamate desuccinylase subfamily. Zn(2+) is required as a cofactor.

It catalyses the reaction N-succinyl-L-glutamate + H2O = L-glutamate + succinate. The protein operates within amino-acid degradation; L-arginine degradation via AST pathway; L-glutamate and succinate from L-arginine: step 5/5. In terms of biological role, transforms N(2)-succinylglutamate into succinate and glutamate. This Burkholderia orbicola (strain MC0-3) protein is Succinylglutamate desuccinylase.